The sequence spans 440 residues: Probable exopolygalacturonase C (440 aa).

Positions 1–21 (MLITNPALLGILASLVPLALG) are cleaved as a signal peptide. N84 and N151 each carry an N-linked (GlcNAc...) asparagine glycan. 3 PbH1 repeats span residues 188–210 (GDDI…PFNT), 217–238 (GTNI…AVNT), and 240–261 (SHNI…SIGS). A glycan (N-linked (GlcNAc...) asparagine) is linked at N219. Catalysis depends on D231, which acts as the Proton donor. The active site involves H255. A glycan (N-linked (GlcNAc...) asparagine) is linked at N271. A PbH1 4 repeat occupies 272 to 293 (ITNLRFEDVTVIDALYAARFKS). N-linked (GlcNAc...) asparagine glycosylation occurs at N313. C389 and C395 are joined by a disulfide. N434 carries N-linked (GlcNAc...) asparagine glycosylation.

The protein belongs to the glycosyl hydrolase 28 family.

It is found in the secreted. It carries out the reaction [(1-&gt;4)-alpha-D-galacturonosyl](n) + H2O = alpha-D-galacturonate + [(1-&gt;4)-alpha-D-galacturonosyl](n-1). Specific in hydrolyzing the terminal glycosidic bond of polygalacturonic acid and oligogalacturonates. The chain is Probable exopolygalacturonase C (pgxC) from Aspergillus fumigatus (strain ATCC MYA-4609 / CBS 101355 / FGSC A1100 / Af293) (Neosartorya fumigata).